Consider the following 165-residue polypeptide: Nucleotide-binding protein NATL1_05371 (165 aa).

Belongs to the YajQ family.

Nucleotide-binding protein. This chain is Nucleotide-binding protein NATL1_05371, found in Prochlorococcus marinus (strain NATL1A).